We begin with the raw amino-acid sequence, 193 residues long: Rho-related GTP-binding protein RhoA-A (193 aa).

GTP contacts are provided by residues 12-19 (GDGACGKT), 30-37 (FPEVYVPT), 59-63 (DTAGQ), 117-120 (NKKD), and 160-162 (SAK). Tyr-34 carries a (Microbial infection) O-linked (GlcNAc) tyrosine; by Yersinia Afp18 glycan. Cys-190 carries the cysteine methyl ester modification. The S-geranylgeranyl cysteine moiety is linked to residue Cys-190. Residues 191-193 (ALL) constitute a propeptide, removed in mature form.

The protein belongs to the small GTPase superfamily. Rho family. (Microbial infection) Glycosylated at Tyr-34 by Yersinia ruckeri toxin Afp18. Mono-O-GlcNAcylation by Afp18 inhibits RhoA activation by guanine nucleotide exchange factors and blocks RhoA signaling.

The protein localises to the cell membrane. Regulates a signal transduction pathway linking plasma membrane receptors to the assembly of focal adhesions and actin stress fibers. The sequence is that of Rho-related GTP-binding protein RhoA-A from Danio rerio (Zebrafish).